Here is a 158-residue protein sequence, read N- to C-terminus: Transcription elongation factor GreA (158 aa).

The stretch at 14 to 76 (VKKLEEELEY…QIENMLKNAN (63 aa)) forms a coiled coil.

The protein belongs to the GreA/GreB family.

Its function is as follows. Necessary for efficient RNA polymerase transcription elongation past template-encoded arresting sites. The arresting sites in DNA have the property of trapping a certain fraction of elongating RNA polymerases that pass through, resulting in locked ternary complexes. Cleavage of the nascent transcript by cleavage factors such as GreA or GreB allows the resumption of elongation from the new 3'terminus. GreA releases sequences of 2 to 3 nucleotides. The chain is Transcription elongation factor GreA from Clostridium acetobutylicum (strain ATCC 824 / DSM 792 / JCM 1419 / IAM 19013 / LMG 5710 / NBRC 13948 / NRRL B-527 / VKM B-1787 / 2291 / W).